We begin with the raw amino-acid sequence, 120 residues long: Ribosome-binding factor A (120 aa).

It belongs to the RbfA family. As to quaternary structure, monomer. Binds 30S ribosomal subunits, but not 50S ribosomal subunits or 70S ribosomes.

The protein resides in the cytoplasm. Its function is as follows. One of several proteins that assist in the late maturation steps of the functional core of the 30S ribosomal subunit. Associates with free 30S ribosomal subunits (but not with 30S subunits that are part of 70S ribosomes or polysomes). Required for efficient processing of 16S rRNA. May interact with the 5'-terminal helix region of 16S rRNA. In Chlamydia abortus (strain DSM 27085 / S26/3) (Chlamydophila abortus), this protein is Ribosome-binding factor A.